A 292-amino-acid chain; its full sequence is F-box/LRR-repeat protein 15 (292 aa).

The 48-residue stretch at 12–59 (LLDLPWEDVLVPHILSYLPLRHILSLQRVSKPFHSLVHIYLCNCRHFD) folds into the F-box domain. 5 LRR repeats span residues 134 to 155 (HLQNICLGHCDWVDCLSMRSLA), 160 to 181 (CLEAIDLTACRQLKDDAISYLV), 186 to 207 (RLKSLSLAVNANISDIAVEETA), 212 to 233 (DLEHLDLTGCLRVKNDSIRTLA), and 238 to 259 (NLKSLKVKHCHNVTESSLGNLR).

It belongs to the FBXL15 family. In terms of assembly, part of the SCF (SKP1-CUL1-F-box) E3 ubiquitin-protein ligase complex SCF(FBXL15).

It is found in the cytoplasm. Its pathway is protein modification; protein ubiquitination. In terms of biological role, substrate recognition component of a SCF (SKP1-CUL1-F-box protein) E3 ubiquitin-protein ligase complex which mediates the ubiquitination and subsequent proteasomal degradation of target proteins. Acts as a positive regulator of the BMP signaling pathway. Required for dorsal/ventral pattern formation. The protein is F-box/LRR-repeat protein 15 (fbxl15) of Xenopus laevis (African clawed frog).